Consider the following 207-residue polypeptide: dTTP/UTP pyrophosphatase (207 aa).

Residue Asp68 is the Proton acceptor of the active site.

It belongs to the Maf family. YhdE subfamily. It depends on a divalent metal cation as a cofactor.

Its subcellular location is the cytoplasm. The catalysed reaction is dTTP + H2O = dTMP + diphosphate + H(+). It catalyses the reaction UTP + H2O = UMP + diphosphate + H(+). Its function is as follows. Nucleoside triphosphate pyrophosphatase that hydrolyzes dTTP and UTP. May have a dual role in cell division arrest and in preventing the incorporation of modified nucleotides into cellular nucleic acids. The polypeptide is dTTP/UTP pyrophosphatase (Staphylothermus marinus (strain ATCC 43588 / DSM 3639 / JCM 9404 / F1)).